Consider the following 819-residue polypeptide: Ent-beyerene synthase KSL2, chloroplastic (819 aa).

Residues 1-58 constitute a chloroplast transit peptide; sequence MLPCLFPAYGSVVACKPSAIDRSPFGLLSQPKQTNRTLIRRPKVTKAFMAIEAMRHCS. The span at 58 to 76 shows a compositional bias: low complexity; the sequence is SSSSSSEEGGAAATTAARS. Residues 58-77 form a disordered region; it reads SSSSSSEEGGAAATTAARSA. 5 residues coordinate Mg(2+): aspartate 567, aspartate 571, asparagine 711, serine 715, and glutamate 719. Positions 567–571 match the DDXXD motif motif; it reads DDFFD.

It belongs to the terpene synthase family. Requires Mg(2+) as cofactor. As to expression, expressed in roots. Highly expressed in stems, flowers and panicle.

The protein localises to the plastid. It localises to the chloroplast. The enzyme catalyses ent-copalyl diphosphate = ent-beyerene + diphosphate. It catalyses the reaction ent-copalyl diphosphate = ent-kaur-16-ene + diphosphate. Its pathway is secondary metabolite biosynthesis; terpenoid biosynthesis. Its function is as follows. Diterpene cyclase involved in jasmonic acid-dependent defense mechanisms in roots by mediating the biosynthesis of labdane-related diterpenoids (LRDs) natural products such as ent-beyerene, an antimicrobial compound. Catalyzes the cyclization of ent-CDP into ent-beyerene as a major and ent-kaurene as a minor product. May be involved in the catalysis of an early step of the gibberellin (GA) biosynthesis pathway. The sequence is that of Ent-beyerene synthase KSL2, chloroplastic from Oryza sativa subsp. japonica (Rice).